The primary structure comprises 349 residues: Glycerol-3-phosphate dehydrogenase [NAD(P)+] (349 aa).

NADPH-binding residues include Trp-20, Arg-43, Arg-44, and Lys-117. The sn-glycerol 3-phosphate site is built by Lys-117 and Gly-147. Position 151 (Ala-151) interacts with NADPH. Sn-glycerol 3-phosphate contacts are provided by Lys-202, Asp-255, Ser-265, Arg-266, and Asn-267. Lys-202 (proton acceptor) is an active-site residue. Arg-266 contacts NADPH. NADPH contacts are provided by Val-297 and Glu-299.

The protein belongs to the NAD-dependent glycerol-3-phosphate dehydrogenase family.

The protein localises to the cytoplasm. It carries out the reaction sn-glycerol 3-phosphate + NAD(+) = dihydroxyacetone phosphate + NADH + H(+). It catalyses the reaction sn-glycerol 3-phosphate + NADP(+) = dihydroxyacetone phosphate + NADPH + H(+). It functions in the pathway membrane lipid metabolism; glycerophospholipid metabolism. In terms of biological role, catalyzes the reduction of the glycolytic intermediate dihydroxyacetone phosphate (DHAP) to sn-glycerol 3-phosphate (G3P), the key precursor for phospholipid synthesis. The sequence is that of Glycerol-3-phosphate dehydrogenase [NAD(P)+] from Mycobacterium leprae (strain TN).